A 711-amino-acid polypeptide reads, in one-letter code: Mitochondrial intermediate peptidase (711 aa).

The N-terminal 33 residues, 1 to 33 (MLLAAGARYARRLCGRGAAAALQGRTGRSCARD), are a transit peptide targeting the mitochondrion. Lysine 124 is modified (N6-acetyllysine). Residue histidine 493 participates in Zn(2+) binding. Glutamate 494 is an active-site residue. Zn(2+)-binding residues include histidine 497 and histidine 500.

Belongs to the peptidase M3 family. In terms of assembly, monomer. Zn(2+) is required as a cofactor.

Its subcellular location is the mitochondrion matrix. It carries out the reaction Release of an N-terminal octapeptide as second stage of processing of some proteins imported into the mitochondrion.. Activity is divalent cation-dependent. It is stimulated by manganese, magnesium or calcium ions and reversibly inhibited by zinc, cobalt and iron. Its function is as follows. Cleaves proteins, imported into the mitochondrion, to their mature size. This is Mitochondrial intermediate peptidase (Mipep) from Mus musculus (Mouse).